The sequence spans 536 residues: uncharacterized protein (536 aa).

Positions 163–394 (LDAYDSMSVQ…MNFIPTRPLE (232 aa)) constitute a Radical SAM core domain. Cys177, Cys181, and Cys184 together coordinate [4Fe-4S] cluster.

It depends on [4Fe-4S] cluster as a cofactor.

This is an uncharacterized protein from Synechocystis sp. (strain ATCC 27184 / PCC 6803 / Kazusa).